A 148-amino-acid chain; its full sequence is NADPH-dependent 7-cyano-7-deazaguanine reductase (148 aa).

Residue Cys50 is the Thioimide intermediate of the active site. Catalysis depends on Asp57, which acts as the Proton donor. Residues 72 to 74 (VES) and 91 to 92 (HE) each bind substrate.

This sequence belongs to the GTP cyclohydrolase I family. QueF type 1 subfamily.

It localises to the cytoplasm. It catalyses the reaction 7-aminomethyl-7-carbaguanine + 2 NADP(+) = 7-cyano-7-deazaguanine + 2 NADPH + 3 H(+). The protein operates within tRNA modification; tRNA-queuosine biosynthesis. Its function is as follows. Catalyzes the NADPH-dependent reduction of 7-cyano-7-deazaguanine (preQ0) to 7-aminomethyl-7-deazaguanine (preQ1). The polypeptide is NADPH-dependent 7-cyano-7-deazaguanine reductase (Helicobacter acinonychis (strain Sheeba)).